A 378-amino-acid polypeptide reads, in one-letter code: Erythronate-4-phosphate dehydrogenase (378 aa).

Substrate is bound by residues Ser45 and Thr66. Asp146 serves as a coordination point for NAD(+). Arg207 is an active-site residue. Residue Asp231 coordinates NAD(+). Glu236 is an active-site residue. The active-site Proton donor is the His253. Gly256 is a binding site for NAD(+).

Belongs to the D-isomer specific 2-hydroxyacid dehydrogenase family. PdxB subfamily. In terms of assembly, homodimer.

Its subcellular location is the cytoplasm. It catalyses the reaction 4-phospho-D-erythronate + NAD(+) = (R)-3-hydroxy-2-oxo-4-phosphooxybutanoate + NADH + H(+). It functions in the pathway cofactor biosynthesis; pyridoxine 5'-phosphate biosynthesis; pyridoxine 5'-phosphate from D-erythrose 4-phosphate: step 2/5. Functionally, catalyzes the oxidation of erythronate-4-phosphate to 3-hydroxy-2-oxo-4-phosphonooxybutanoate. In Wigglesworthia glossinidia brevipalpis, this protein is Erythronate-4-phosphate dehydrogenase.